Here is a 321-residue protein sequence, read N- to C-terminus: Histidine N-alpha-methyltransferase (321 aa).

Y56 contacts L-histidine. S-adenosyl-L-methionine is bound by residues G86, K92, D113, and 141–142 (DF). Residues N166, Y206, and 282–284 (EVS) each bind L-histidine.

The protein belongs to the methyltransferase superfamily. EgtD family. In terms of assembly, monomer.

It carries out the reaction L-histidine + 3 S-adenosyl-L-methionine = hercynine + 3 S-adenosyl-L-homocysteine + 3 H(+). The protein operates within amino-acid biosynthesis; ergothioneine biosynthesis. Its function is as follows. Catalyzes the SAM-dependent triple methylation of the alpha-amino group of histidine to form hercynine, a step in the biosynthesis pathway of ergothioneine. Among all the proteinogenic amino acids, only L-histidine is a substrate. The chain is Histidine N-alpha-methyltransferase from Mycolicibacterium smegmatis (strain ATCC 700084 / mc(2)155) (Mycobacterium smegmatis).